The chain runs to 147 residues: UPF0178 protein VS_2364 (147 aa).

Belongs to the UPF0178 family.

The sequence is that of UPF0178 protein VS_2364 from Vibrio atlanticus (strain LGP32) (Vibrio splendidus (strain Mel32)).